We begin with the raw amino-acid sequence, 440 residues long: MHYSLFFGAALAASVSTVSAEAGCNNDGGNWYCSAVDLITYSGFSTSGTYDLVTSMSGGKCGSEKHEYSGAFGPLGEELSIHLRGPMQLFSMAVYNRGSGEKPKRELKPSIHERRHGHSHQRFHEKRAVGDKVVAIIDGQVVSWINEYAGGAPAAPTSAPGAPGINEPQVKSNGYKGGDKPKDPKPHGPVNVAPGDWRRVALVDTDKQEAEGVSFLNNNGGWDKGVDQAFGAALKRLGLDDDFFGMGDGPNFPKDPTIPDGKELIIMSDKSCEGGSCGFTRPGADAFHGFGGEDKIFLFRVAMPLTGTRGSSIYDPKDMPAIWLLNANIPRTSQYPMDPTCSCWKSGCGEFDVLEVLAPGDKRCKSTYHTKQELSGGSSYYFDRPEEPITIAVVFNGDDGTLYVKTLKEGFDKFPETLSPEDVKKLCASDGKTNNFALAS.

The N-terminal stretch at 1–20 (MHYSLFFGAALAASVSTVSA) is a signal peptide. The segment covering 100 to 112 (GEKPKRELKPSIH) has biased composition (basic and acidic residues). Disordered stretches follow at residues 100–126 (GEKP…FHEK) and 153–195 (PAAP…VAPG). A compositionally biased stretch (basic residues) spans 113 to 125 (ERRHGHSHQRFHE). Residues 153-164 (PAAPTSAPGAPG) show a composition bias toward low complexity. The span at 177 to 186 (GGDKPKDPKP) shows a compositional bias: basic and acidic residues. The short motif at 350 to 355 (EFDVLE) is the ExDxxE motif element.

Belongs to the PGA52 family.

The protein localises to the secreted. The catalysed reaction is Hydrolysis of (1-&gt;3)-beta-D-glucosidic linkages in (1-&gt;3)-beta-D-glucans.. Functionally, probable circularly permuted 1,3-beta-glucanase involved in cell wall modification through beta-1,3-glucan network alterations such as increased branching or remodeling. The sequence is that of Probable circularly permuted 1,3-beta-glucanase from Arthroderma benhamiae (strain ATCC MYA-4681 / CBS 112371) (Trichophyton mentagrophytes).